Reading from the N-terminus, the 541-residue chain is Threonine--tRNA ligase catalytic subunit (541 aa).

Residues 135–429 (DHRIIGERMD…LLEHFRGKLP (295 aa)) are catalytic. The Zn(2+) site is built by C227, H278, and H406.

Belongs to the class-II aminoacyl-tRNA synthetase family. As to quaternary structure, homodimer. Probably interacts with its editing subunit. The cofactor is Zn(2+).

The protein localises to the cytoplasm. It catalyses the reaction tRNA(Thr) + L-threonine + ATP = L-threonyl-tRNA(Thr) + AMP + diphosphate + H(+). In terms of biological role, catalyzes the attachment of threonine to tRNA(Thr) in a two-step reaction: L-threonine is first activated by ATP to form Thr-AMP and then transferred to the acceptor end of tRNA(Thr). Also activates L-serine and transfers it to tRNA(Thr) but cannot deacylate incorrectly charged amino acid; unlike most archaea the editing function is found in a freestanding protein. This is Threonine--tRNA ligase catalytic subunit from Metallosphaera sedula (strain ATCC 51363 / DSM 5348 / JCM 9185 / NBRC 15509 / TH2).